A 701-amino-acid chain; its full sequence is Glycine--tRNA ligase beta subunit (701 aa).

This sequence belongs to the class-II aminoacyl-tRNA synthetase family. Tetramer of two alpha and two beta subunits.

Its subcellular location is the cytoplasm. It catalyses the reaction tRNA(Gly) + glycine + ATP = glycyl-tRNA(Gly) + AMP + diphosphate. The chain is Glycine--tRNA ligase beta subunit from Helicobacter pylori (strain HPAG1).